The primary structure comprises 340 residues: Glutamyl-tRNA reductase (340 aa).

Residues 49–52, serine 108, 113–115, and glutamine 119 contribute to the substrate site; these read TCNR and ETE. The active-site Nucleophile is the cysteine 50. 188-193 is an NADP(+) binding site; that stretch reads GAGEMS.

The protein belongs to the glutamyl-tRNA reductase family. Homodimer.

It catalyses the reaction (S)-4-amino-5-oxopentanoate + tRNA(Glu) + NADP(+) = L-glutamyl-tRNA(Glu) + NADPH + H(+). The protein operates within porphyrin-containing compound metabolism; protoporphyrin-IX biosynthesis; 5-aminolevulinate from L-glutamyl-tRNA(Glu): step 1/2. Its function is as follows. Catalyzes the NADPH-dependent reduction of glutamyl-tRNA(Glu) to glutamate 1-semialdehyde (GSA). The protein is Glutamyl-tRNA reductase of Akkermansia muciniphila (strain ATCC BAA-835 / DSM 22959 / JCM 33894 / BCRC 81048 / CCUG 64013 / CIP 107961 / Muc).